Consider the following 398-residue polypeptide: Cell division protein FtsZ (398 aa).

Residues G24 to N28, G111 to G113, E154, R158, and D202 contribute to the GTP site. Residues G333–A381 are disordered. Residues T364–P373 show a composition bias toward basic and acidic residues.

It belongs to the FtsZ family. Homodimer. Polymerizes to form a dynamic ring structure in a strictly GTP-dependent manner. Interacts directly with several other division proteins.

The protein localises to the cytoplasm. Essential cell division protein that forms a contractile ring structure (Z ring) at the future cell division site. The regulation of the ring assembly controls the timing and the location of cell division. One of the functions of the FtsZ ring is to recruit other cell division proteins to the septum to produce a new cell wall between the dividing cells. Binds GTP and shows GTPase activity. The chain is Cell division protein FtsZ from Wolbachia sp.